The following is a 296-amino-acid chain: MPHTLLILNGKESGNPEVREAVKNVRDEGLTLHVRITWEHGDAKRYVEEAATLAVSTVIAGGGDGTINEVATALMSLPADKRPCLGILPLGTANDFATGCNIPLQIENALQLAVKGRAVAIDLAQVNGEHYFINMATGGFGTRITTETPDKLKAALGGVSYFIHGLMRLDALKADSCKIHGPDFHWSGDALVIGIGNGKQAGGGQLLCPDALINDGLMQLRLLTAKELLPAVLSTLFNGEKNKNVIDATVPWLDITAPNDITFNLDGEPLSGRYFHIEILPHAIQCRLPPNCPLLG.

The DAGKc domain maps to 1–130 (MPHTLLILNG…IDLAQVNGEH (130 aa)). ATP is bound by residues T37, 63 to 69 (GDGTINE), and T92. Mg(2+)-binding residues include L212, D215, and L217. Residue E268 is the Proton acceptor of the active site.

The protein belongs to the diacylglycerol/lipid kinase family. YegS lipid kinase subfamily. It depends on Mg(2+) as a cofactor. Ca(2+) is required as a cofactor.

It localises to the cytoplasm. Probably phosphorylates lipids; the in vivo substrate is unknown. In Yersinia pseudotuberculosis serotype I (strain IP32953), this protein is Probable lipid kinase YegS-like.